The sequence spans 216 residues: Lipoprotein signal peptidase (216 aa).

A disordered region spans residues 1-21 (MATSRTAPTRAPSLRSSPALE). Transmembrane regions (helical) follow at residues 31 to 51 (VGAL…DQIT), 89 to 109 (GSTW…IWYA), and 114 to 134 (STAW…NLTD). Active-site residues include Asp-149 and Asp-164. A helical membrane pass occupies residues 159-179 (IFNLADVAIVFSMGLFLLLTL). Residues 189–216 (QRDEGAGVSSASPAGDESAADKPENLSA) are disordered. Residues 207–216 (AADKPENLSA) are compositionally biased toward basic and acidic residues.

Belongs to the peptidase A8 family.

The protein localises to the cell membrane. The enzyme catalyses Release of signal peptides from bacterial membrane prolipoproteins. Hydrolyzes -Xaa-Yaa-Zaa-|-(S,diacylglyceryl)Cys-, in which Xaa is hydrophobic (preferably Leu), and Yaa (Ala or Ser) and Zaa (Gly or Ala) have small, neutral side chains.. It functions in the pathway protein modification; lipoprotein biosynthesis (signal peptide cleavage). In terms of biological role, this protein specifically catalyzes the removal of signal peptides from prolipoproteins. In Leifsonia xyli subsp. xyli (strain CTCB07), this protein is Lipoprotein signal peptidase.